Reading from the N-terminus, the 148-residue chain is Translation initiation factor 2 subunit beta (148 aa).

This sequence belongs to the eIF-2-beta/eIF-5 family. Heterotrimer composed of an alpha, a beta and a gamma chain.

Its function is as follows. eIF-2 functions in the early steps of protein synthesis by forming a ternary complex with GTP and initiator tRNA. In Aeropyrum pernix (strain ATCC 700893 / DSM 11879 / JCM 9820 / NBRC 100138 / K1), this protein is Translation initiation factor 2 subunit beta (eif2b).